A 1325-amino-acid chain; its full sequence is Clustered mitochondria protein homolog (1325 aa).

Residues Pro311–Leu573 enclose the Clu domain. 3 disordered regions span residues Lys893–Thr937, Asp1032–Leu1063, and Gln1245–Ser1325. Residues Ser1265 to His1275 are compositionally biased toward basic residues. The span at Gln1276–Pro1285 shows a compositional bias: low complexity. A compositionally biased stretch (basic residues) spans Ala1314–Ser1325.

Belongs to the CLU family. In terms of assembly, may associate with the eukaryotic translation initiation factor 3 (eIF-3) complex.

The protein localises to the cytoplasm. Functionally, mRNA-binding protein involved in proper cytoplasmic distribution of mitochondria. This is Clustered mitochondria protein homolog from Malassezia globosa (strain ATCC MYA-4612 / CBS 7966) (Dandruff-associated fungus).